A 229-amino-acid chain; its full sequence is Triosephosphate isomerase (229 aa).

16-18 provides a ligand contact to substrate; that stretch reads NFK. His100 acts as the Electrophile in catalysis. Glu148 (proton acceptor) is an active-site residue. Substrate-binding positions include Ile153, Gly188, and 209 to 210; that span reads AS.

Belongs to the triosephosphate isomerase family. In terms of assembly, homotetramer; dimer of dimers.

The protein localises to the cytoplasm. The catalysed reaction is D-glyceraldehyde 3-phosphate = dihydroxyacetone phosphate. The protein operates within carbohydrate biosynthesis; gluconeogenesis. Its pathway is carbohydrate degradation; glycolysis; D-glyceraldehyde 3-phosphate from glycerone phosphate: step 1/1. In terms of biological role, involved in the gluconeogenesis. Catalyzes stereospecifically the conversion of dihydroxyacetone phosphate (DHAP) to D-glyceraldehyde-3-phosphate (G3P). This chain is Triosephosphate isomerase, found in Methanothermobacter thermautotrophicus (strain ATCC 29096 / DSM 1053 / JCM 10044 / NBRC 100330 / Delta H) (Methanobacterium thermoautotrophicum).